The sequence spans 830 residues: Isethionate sulfite-lyase (830 aa).

One can recognise a PFL domain in the interval Lys31–Val700. 2-hydroxyethane-1-sulfonate contacts are provided by residues Arg189, Gln193, Cys468 to Glu470, and Arg678. Cys468 functions as the Cysteine radical intermediate in the catalytic mechanism. Glu470 functions as the Proton acceptor in the catalytic mechanism. The Glycine radical domain occupies Asp707–Met830. The residue at position 805 (Gly805) is a Glycine radical.

Belongs to the glycyl radical enzyme (GRE) family. As to quaternary structure, homodimer. Post-translationally, requires the activating protein IslB to generate the key active site glycyl radical on Gly-805 that is involved in catalysis.

It carries out the reaction 2-hydroxyethane-1-sulfonate = acetaldehyde + sulfite + H(+). It functions in the pathway organosulfur degradation; alkanesulfonate degradation. Its function is as follows. Involved in an anaerobic respiration pathway that converts the sulfonate taurine (2-aminoethanesulfonate) to ammonia, acetate and sulfide. Catalyzes the radical-mediated C-S bond cleavage of isethionate (2-hydroxyethanesulfonate) to form sulfite and acetaldehyde. Is not able to use any alternate organosulfonate or (S)-1,2-propanediol or choline as a substrate, showing that this enzyme is highly specific for isethionate. In Bilophila wadsworthia (strain 3_1_6), this protein is Isethionate sulfite-lyase.